A 161-amino-acid chain; its full sequence is Tick receptor for ospA (161 aa).

In terms of assembly, interacts with ospA protein from B.burgdorferi. In terms of processing, glycosylated. Specifically expressed in gut. Localizes predominantly in the intercellular spaces and luminal surface of the gut. In the gut, it localizes along tight junctions. Not expressed in salivary gland or hemolymph.

The protein resides in the cell membrane. Functionally, serves as a receptor for ospA protein of B.burgdorferi, the Lyme disease agent. Required for spirochetal colonization. Essential for pathogen adherence to the vector. The protein is Tick receptor for ospA (TROSPA) of Ixodes scapularis (Black-legged tick).